Here is an 840-residue protein sequence, read N- to C-terminus: Lethal(3)malignant brain tumor-like protein 1 (840 aa).

A Phosphoserine modification is found at Ser117. Residues 127–269 are disordered; that stretch reads EYEDGGAPAG…WSSSQPATGE (143 aa). Positions 156 to 165 are enriched in acidic residues; it reads PNQDPPEDDS. The segment covering 200-210 has biased composition (polar residues); that stretch reads VENSSGSTSAS. The segment covering 236 to 247 has biased composition (basic and acidic residues); the sequence is AMEKQEEGKDPE. A compositionally biased stretch (polar residues) spans 250-266; that stretch reads PTASTPESEEWSSSQPA. MBT repeat units follow at residues 274 to 374, 382 to 481, and 490 to 585; these read WSWE…LQPP, FSWS…LTPP, and FCWE…LQPP. Residues 447–454 are interaction with monomethylated and dimethylated peptides; it reads FDNWDDTY. Residues 580-605 are disordered; sequence HPLQPPLGPREPSSASPGGCPPLSYR. Residues 613 to 656 form a CCHHC-type zinc finger; it reads SKYSFHHRKCPTPGCDGSGHVTGKFTAHHCLSGCPLAERNQSRL. Positions 622, 627, 640, and 646 each coordinate Zn(2+). The disordered stretch occupies residues 657–697; the sequence is KAELSDSEASARKKNLSGFSPRKKPRHHGRIGRPPKYRKIP. Residues 677 to 695 show a composition bias toward basic residues; it reads PRKKPRHHGRIGRPPKYRK.

As to quaternary structure, homodimer. Interacts with RB1/RB (when monomethylated at 'Lys-860'). Interacts with p53/TP53 (when monomethylated at 'Lys-382'). Interacts with CBX3, ETV6, KMT5A and VCP/p97. Ubiquitinated in a VCP/p97-dependent way following DNA damage, leading to its removal from DNA damage sites, promoting accessibility of H4K20me2 mark for DNA repair protein TP53BP1, which is then recruited to DNA damage sites. As to expression, widely expressed. Expression is reduced in colorectal cancer cell line SW480 and promyelocytic leukemia cell line HL-60.

The protein resides in the nucleus. Its function is as follows. Polycomb group (PcG) protein that specifically recognizes and binds mono- and dimethyllysine residues on target proteins, thereby acting as a 'reader' of a network of post-translational modifications. PcG proteins maintain the transcriptionally repressive state of genes: acts as a chromatin compaction factor by recognizing and binding mono- and dimethylated histone H1b/H1-4 at 'Lys-26' (H1bK26me1 and H1bK26me2) and histone H4 at 'Lys-20' (H4K20me1 and H4K20me2), leading to condense chromatin and repress transcription. Recognizes and binds p53/TP53 monomethylated at 'Lys-382', leading to repress p53/TP53-target genes. Also recognizes and binds RB1/RB monomethylated at 'Lys-860'. Participates in the ETV6-mediated repression. Probably plays a role in cell proliferation. Overexpression induces multinucleated cells, suggesting that it is required to accomplish normal mitosis. The chain is Lethal(3)malignant brain tumor-like protein 1 (L3MBTL1) from Homo sapiens (Human).